The primary structure comprises 607 residues: NAD-dependent protein deacetylase sir-2.1 (607 aa).

Residues M1 to N68 are disordered. Over residues E55 to S64 the composition is skewed to low complexity. Positions K128–T401 constitute a Deacetylase sirtuin-type domain. NAD(+)-binding positions include G153–Y172 and Q237–D240. H255 acts as the Proton acceptor in catalysis. Positions 263, 266, 287, and 290 each coordinate Zn(2+). NAD(+) is bound by residues G327–S329, N352–E354, and C369. The tract at residues E426–E453 is disordered.

This sequence belongs to the sirtuin family. Class I subfamily. Interacts with ftt-2 and par-5. Interacts with daf-16 following heat-shock, which causes daf-16 to accumulate in the nucleus. Interaction with daf-16 is promoted by ftt-2. Interacts with transcriptional coregulator hcf-1. The cofactor is Zn(2+).

The protein resides in the nucleus. The protein localises to the cytoplasm. The catalysed reaction is N(6)-acetyl-L-lysyl-[protein] + NAD(+) + H2O = 2''-O-acetyl-ADP-D-ribose + nicotinamide + L-lysyl-[protein]. NAD-dependent deacetylase. Involved in metabolism, apoptosis, response to oxidative stress, response to DNA damage, and determination of lifespan. Required for a reduction of the 'Lys-16' acetylation of histone H4 (H4K16ac) on dosage-compensated X chromosomes in hermaphrodites. Plays a role in germ cell and somatic cell apoptosis in response to DNA damage. Functions upstream of daf-16/Forkhead box protein O in the Insulin/IGF-1-like signaling (IIS) mediated pathway, promoting daf-16 mediated transcriptional activation and increased lifespan. May also regulate lifespan independently of daf-16 by modulating the transcription of genes involved in the stress response of the endoplasmic reticulum (ER). Functions upstream of transcriptional coregulator hcf-1, perhaps acting independently of the IIS mediated pathway, to modulate lifespan and oxidative stress response. Acts upstream of the nicotinic acid metabolism pathway, which may be linked to the regulation of longevity. Plays a role in ascaroside-mediated longevity and stress resistance. The sequence is that of NAD-dependent protein deacetylase sir-2.1 from Caenorhabditis elegans.